We begin with the raw amino-acid sequence, 467 residues long: ATP-dependent protease ATPase subunit HslU (467 aa).

Residues I20, 62–67 (GVGKTE), D280, E345, and R417 each bind ATP.

The protein belongs to the ClpX chaperone family. HslU subfamily. As to quaternary structure, a double ring-shaped homohexamer of HslV is capped on each side by a ring-shaped HslU homohexamer. The assembly of the HslU/HslV complex is dependent on binding of ATP.

The protein resides in the cytoplasm. In terms of biological role, ATPase subunit of a proteasome-like degradation complex; this subunit has chaperone activity. The binding of ATP and its subsequent hydrolysis by HslU are essential for unfolding of protein substrates subsequently hydrolyzed by HslV. HslU recognizes the N-terminal part of its protein substrates and unfolds these before they are guided to HslV for hydrolysis. The sequence is that of ATP-dependent protease ATPase subunit HslU from Ligilactobacillus salivarius (strain UCC118) (Lactobacillus salivarius).